Reading from the N-terminus, the 121-residue chain is Small ribosomal subunit protein bS6 (121 aa).

Residues 99–121 (PSLMMRNVEREEARKTQQQEFAA) form a disordered region. The segment covering 105–115 (NVEREEARKTQ) has biased composition (basic and acidic residues).

Belongs to the bacterial ribosomal protein bS6 family.

Its function is as follows. Binds together with bS18 to 16S ribosomal RNA. The chain is Small ribosomal subunit protein bS6 from Polaromonas naphthalenivorans (strain CJ2).